The primary structure comprises 79 residues: D-alanyl carrier protein (79 aa).

A Carrier domain is found at 1-77; the sequence is MDIKSEVIEI…KIIAGIVELQ (77 aa). Residue Ser35 is modified to O-(pantetheine 4'-phosphoryl)serine.

This sequence belongs to the DltC family. 4'-phosphopantetheine is transferred from CoA to a specific serine of apo-DCP.

The protein localises to the cytoplasm. It functions in the pathway cell wall biogenesis; lipoteichoic acid biosynthesis. Functionally, carrier protein involved in the D-alanylation of lipoteichoic acid (LTA). The loading of thioester-linked D-alanine onto DltC is catalyzed by D-alanine--D-alanyl carrier protein ligase DltA. The DltC-carried D-alanyl group is further transferred to cell membrane phosphatidylglycerol (PG) by forming an ester bond, probably catalyzed by DltD. D-alanylation of LTA plays an important role in modulating the properties of the cell wall in Gram-positive bacteria, influencing the net charge of the cell wall. The sequence is that of D-alanyl carrier protein from Streptococcus pneumoniae serotype 2 (strain D39 / NCTC 7466).